The sequence spans 411 residues: Zinc finger protein draculin (411 aa).

Residues 1 to 33 (MKNTTKPCRTEHHNAEGQRDRMEGNKKGETKAK) are disordered. A compositionally biased stretch (basic and acidic residues) spans 8-32 (CRTEHHNAEGQRDRMEGNKKGETKA). C2H2-type zinc fingers lie at residues 36-58 (VACS…MRVH), 64-86 (YRCD…LDIH), 92-114 (YTCD…MTLH), 120-142 (YKCD…MKLH), 148-170 (HKCE…LMVH), 176-198 (YTCD…MNIH), 204-226 (YTCD…MRFH), 232-254 (FTCD…MKIH), 260-282 (YTCD…MTHH), 288-310 (FHCD…IKTH), 316-338 (YSCL…EKRH), 344-366 (FMCF…LPVH), and 372-394 (YMCS…EKTH).

As to expression, specifically expressed in the hematopoietic lineage during embryogenesis; first expressed at the late blastula stage around the blastoderm margin. During gastrulation, restricted to the ventral mesoderm, the presumptive prechordal plate and the dorso-marginal cells of the organizer. At the 3-somite stage, strongly expressed in a caudal domain (marking the erythroid lineage) and a cephalic domain of the lateral mesoderm. At the 8- to 10-somite stage, caudal expression is in two bands of lateral mesoderm which later converge at the midline. Anterior expression is also in two bands of lateral mesoderm which converge as two patches at the midline by the 15-somite stage, with increased scattering of single cells (macrophage precursors) away from the midline to the yolksac. Once at the yolksac, expression is lost. By 20-24 hours post-fertilization (hpf), expressed in proerythroblasts in the erythroid blood island centered above the uro-genital opening. Expression persists in circulating erythroblasts but is lost in mature erythrocytes.

This Danio rerio (Zebrafish) protein is Zinc finger protein draculin.